The primary structure comprises 438 residues: Anaerobic glycerol-3-phosphate dehydrogenase subunit B (438 aa).

This sequence belongs to the anaerobic G-3-P dehydrogenase subunit B family. In terms of assembly, composed of a catalytic GlpA/B dimer and of membrane bound GlpC. It depends on FMN as a cofactor.

The catalysed reaction is a quinone + sn-glycerol 3-phosphate = dihydroxyacetone phosphate + a quinol. The protein operates within polyol metabolism; glycerol degradation via glycerol kinase pathway; glycerone phosphate from sn-glycerol 3-phosphate (anaerobic route): step 1/1. In terms of biological role, conversion of glycerol 3-phosphate to dihydroxyacetone. Uses fumarate or nitrate as electron acceptor. In Vibrio vulnificus (strain CMCP6), this protein is Anaerobic glycerol-3-phosphate dehydrogenase subunit B.